Consider the following 87-residue polypeptide: MEKTYGKTVLPLSRVKRIIKQDEDVHYCSNASALLISVATELFVEKLATEAYQLAKLQKRKGIRYRDVEDVVRKDDQFEFLSDLFSI.

As to quaternary structure, DNA polymerase epsilon is a heterotetramer consisting of cdc20/Pol2, dpb2, dpb3, and dpb4. Also forms a heterodimer consisting dpb3 and dpb4. Interacts directly with cdc20/pol2 and dpb4.

Its subcellular location is the nucleus. In terms of biological role, as accessory component of the DNA polymerase epsilon (DNA polymerase II) participates in chromosomal DNA replication. It is required during synthesis of the leading and lagging DNA strands at the replication fork and binds at/or near replication origins and moves along DNA with the replication fork. It has 3'-5' proofreading exonuclease activity that correct errors arising during DNA replication. It is also involved in DNA synthesis during DNA repair. The dpb3-dpb4 dimer associates with histone deacetylases, chromatin remodelers, and histones and plays a crucial role in the inheritance of histone hypoacetylation and H3K9 methylation in heterochromatin. The dpb3-dpb4 dimer is also required for the recruitment of sir2 to heterochromatin. This chain is DNA polymerase epsilon subunit C, found in Schizosaccharomyces pombe (strain 972 / ATCC 24843) (Fission yeast).